A 159-amino-acid chain; its full sequence is Phosphopantetheine adenylyltransferase (159 aa).

Substrate is bound at residue Ser9. Residues 9–10 (SF) and His17 contribute to the ATP site. Residues Lys41, Leu73, and Lys87 each coordinate substrate. ATP contacts are provided by residues 88–90 (GLR), Glu98, and 123–129 (YSYLSSS).

This sequence belongs to the bacterial CoaD family. Homohexamer. Mg(2+) is required as a cofactor.

Its subcellular location is the cytoplasm. It carries out the reaction (R)-4'-phosphopantetheine + ATP + H(+) = 3'-dephospho-CoA + diphosphate. It participates in cofactor biosynthesis; coenzyme A biosynthesis; CoA from (R)-pantothenate: step 4/5. Functionally, reversibly transfers an adenylyl group from ATP to 4'-phosphopantetheine, yielding dephospho-CoA (dPCoA) and pyrophosphate. This Clostridium botulinum (strain Eklund 17B / Type B) protein is Phosphopantetheine adenylyltransferase.